Reading from the N-terminus, the 1161-residue chain is Lateral signaling target protein 2 homolog (1161 aa).

Disordered stretches follow at residues 417–510 (ATGS…EVDD), 583–831 (AAGS…PTQS), 890–918 (MNSS…HNHP), 935–978 (DQQN…SVES), 992–1014 (SSPV…TGQE), and 1029–1095 (GKAS…EPPR). Over residues 419-429 (GSSGFGSGRGG) the composition is skewed to gly residues. The segment covering 438–453 (PKQRHNQAHLRQRGAP) has biased composition (basic residues). The segment covering 468-487 (GDDREPVVEEDNNNHLRKEI) has biased composition (basic and acidic residues). Positions 488 to 510 (EEEDVDDDMEEEEEDEEEDEVDD) are enriched in acidic residues. Positions 583 to 601 (AAGSGGQQQQQQQQQLIDS) are enriched in low complexity. Over residues 669-704 (SDYEEADVDDEPDDVDADDDDEEEDDVVGEVEEQND) the composition is skewed to acidic residues. Basic residues predominate over residues 728–742 (KAARNHRKSSHHRPR). The segment covering 743-757 (PSTSSSSSSAAYRNK) has biased composition (low complexity). Positions 758-773 (SQSHQHHHHHHHHHHH) are enriched in basic residues. Composition is skewed to low complexity over residues 781-800 (GTSS…SNGS) and 807-831 (MQQQ…PTQS). Residues 896–910 (EPDEPPEPSGSEEES) show a composition bias toward acidic residues. 2 stretches are compositionally biased toward polar residues: residues 935–948 (DQQN…QSIY) and 956–967 (EQDSVFGSSGDS). The segment covering 996–1010 (GAGGAGGGGMVGGSR) has biased composition (gly residues). The span at 1054-1065 (SRSSPSSPVNSN) shows a compositional bias: low complexity. Basic and acidic residues predominate over residues 1081 to 1094 (TAHEQQRRMPEEPP). Residues 1099-1159 (DCDAPRCMAC…VCRDCYIHEV (61 aa)) form an FYVE-type zinc finger. Zn(2+) is bound by residues Cys1105, Cys1108, Cys1121, Cys1124, Cys1129, Cys1132, Cys1151, and Cys1154.

The protein belongs to the lst-2 family.

Its function is as follows. Negative regulator of epidermal growth factor receptor (EGFR) signaling. This Anopheles gambiae (African malaria mosquito) protein is Lateral signaling target protein 2 homolog.